A 218-amino-acid polypeptide reads, in one-letter code: tRNA (cytidine(56)-2'-O)-methyltransferase (218 aa).

S-adenosyl-L-methionine-binding positions include leucine 81, 106 to 110 (GAEKV), and 124 to 131 (IGNQPHSE). Positions 170–218 (KVGEEGPSGGAPGVRAERGRGGRGEGVQGADEVRGHKRGATDRDLGDET) are disordered. A compositionally biased stretch (basic and acidic residues) spans 200–218 (DEVRGHKRGATDRDLGDET).

The protein belongs to the aTrm56 family. As to quaternary structure, homodimer.

It is found in the cytoplasm. It catalyses the reaction cytidine(56) in tRNA + S-adenosyl-L-methionine = 2'-O-methylcytidine(56) in tRNA + S-adenosyl-L-homocysteine + H(+). In terms of biological role, specifically catalyzes the AdoMet-dependent 2'-O-ribose methylation of cytidine at position 56 in tRNAs. This is tRNA (cytidine(56)-2'-O)-methyltransferase from Ignicoccus hospitalis (strain KIN4/I / DSM 18386 / JCM 14125).